We begin with the raw amino-acid sequence, 61 residues long: Small ribosomal subunit protein uS14 (61 aa).

Residues C24, C27, C40, and C43 each coordinate Zn(2+).

The protein belongs to the universal ribosomal protein uS14 family. Zinc-binding uS14 subfamily. As to quaternary structure, part of the 30S ribosomal subunit. Contacts proteins S3 and S10. Zn(2+) is required as a cofactor.

In terms of biological role, binds 16S rRNA, required for the assembly of 30S particles and may also be responsible for determining the conformation of the 16S rRNA at the A site. The chain is Small ribosomal subunit protein uS14 from Mycoplasmoides gallisepticum (strain R(low / passage 15 / clone 2)) (Mycoplasma gallisepticum).